The following is a 366-amino-acid chain: CRS2-associated factor 2, mitochondrial (366 aa).

The N-terminal 14 residues, 1–14 (MLLPRDLLLLPWRR), are a transit peptide targeting the mitochondrion. The interval 24-82 (RRLNHHRAPPFSDPDDDPPFTRLAERPPRAPSKKKKKEEEDQGGRIRPPEPASSDLPFD) is disordered. A compositionally biased stretch (basic and acidic residues) spans 60 to 71 (KEEEDQGGRIRP). CRM domains are found at residues 143-241 (EPLA…QRPQ) and 263-359 (DGLT…SVSL).

In terms of assembly, part of large ribonucleo-protein complexes that include group IIB introns.

It localises to the mitochondrion. In terms of biological role, may be involved in the splicing of group IIB introns in mitochondria. This Oryza sativa subsp. japonica (Rice) protein is CRS2-associated factor 2, mitochondrial.